The following is a 104-amino-acid chain: ATP-dependent Clp protease adapter protein ClpS (104 aa).

It belongs to the ClpS family. In terms of assembly, binds to the N-terminal domain of the chaperone ClpA.

In terms of biological role, involved in the modulation of the specificity of the ClpAP-mediated ATP-dependent protein degradation. The polypeptide is ATP-dependent Clp protease adapter protein ClpS (Oleidesulfovibrio alaskensis (strain ATCC BAA-1058 / DSM 17464 / G20) (Desulfovibrio alaskensis)).